Reading from the N-terminus, the 155-residue chain is 2-C-methyl-D-erythritol 2,4-cyclodiphosphate synthase (155 aa).

2 residues coordinate a divalent metal cation: aspartate 8 and histidine 10. 4-CDP-2-C-methyl-D-erythritol 2-phosphate-binding positions include 8–10 (DVH) and 34–35 (HS). Histidine 42 is an a divalent metal cation binding site. 4-CDP-2-C-methyl-D-erythritol 2-phosphate-binding positions include 56–58 (DIG), 61–65 (FPDSD), 100–106 (AQKPKML), 132–135 (TTEE), phenylalanine 139, and lysine 142.

This sequence belongs to the IspF family. In terms of assembly, homotrimer. A divalent metal cation serves as cofactor.

The catalysed reaction is 4-CDP-2-C-methyl-D-erythritol 2-phosphate = 2-C-methyl-D-erythritol 2,4-cyclic diphosphate + CMP. It participates in isoprenoid biosynthesis; isopentenyl diphosphate biosynthesis via DXP pathway; isopentenyl diphosphate from 1-deoxy-D-xylulose 5-phosphate: step 4/6. Its function is as follows. Involved in the biosynthesis of isopentenyl diphosphate (IPP) and dimethylallyl diphosphate (DMAPP), two major building blocks of isoprenoid compounds. Catalyzes the conversion of 4-diphosphocytidyl-2-C-methyl-D-erythritol 2-phosphate (CDP-ME2P) to 2-C-methyl-D-erythritol 2,4-cyclodiphosphate (ME-CPP) with a corresponding release of cytidine 5-monophosphate (CMP). The protein is 2-C-methyl-D-erythritol 2,4-cyclodiphosphate synthase of Clostridium botulinum (strain Kyoto / Type A2).